The following is a 347-amino-acid chain: Probable dual-specificity RNA methyltransferase RlmN (347 aa).

Residue Glu90 is the Proton acceptor of the active site. Residues Tyr96–Asp326 enclose the Radical SAM core domain. An intrachain disulfide couples Cys103 to Cys331. [4Fe-4S] cluster-binding residues include Cys110, Cys114, and Cys117. S-adenosyl-L-methionine-binding positions include Gly157–Glu158, Ser189, Ser212–His214, and Asn288. Cys331 (S-methylcysteine intermediate) is an active-site residue.

The protein belongs to the radical SAM superfamily. RlmN family. The cofactor is [4Fe-4S] cluster.

The protein resides in the cytoplasm. It carries out the reaction adenosine(2503) in 23S rRNA + 2 reduced [2Fe-2S]-[ferredoxin] + 2 S-adenosyl-L-methionine = 2-methyladenosine(2503) in 23S rRNA + 5'-deoxyadenosine + L-methionine + 2 oxidized [2Fe-2S]-[ferredoxin] + S-adenosyl-L-homocysteine. The catalysed reaction is adenosine(37) in tRNA + 2 reduced [2Fe-2S]-[ferredoxin] + 2 S-adenosyl-L-methionine = 2-methyladenosine(37) in tRNA + 5'-deoxyadenosine + L-methionine + 2 oxidized [2Fe-2S]-[ferredoxin] + S-adenosyl-L-homocysteine. Its function is as follows. Specifically methylates position 2 of adenine 2503 in 23S rRNA and position 2 of adenine 37 in tRNAs. This Clostridium botulinum (strain Eklund 17B / Type B) protein is Probable dual-specificity RNA methyltransferase RlmN.